The primary structure comprises 338 residues: Lipoate-protein ligase A (338 aa).

Residues 29–216 enclose the BPL/LPL catalytic domain; it reads PATQRVLFLW…AFFAHYGERV (188 aa). Residues R71, 76–79, and K134 contribute to the ATP site; that span reads GAVF. K134 contributes to the (R)-lipoate binding site.

Belongs to the LplA family. In terms of assembly, monomer.

The protein localises to the cytoplasm. The catalysed reaction is L-lysyl-[lipoyl-carrier protein] + (R)-lipoate + ATP = N(6)-[(R)-lipoyl]-L-lysyl-[lipoyl-carrier protein] + AMP + diphosphate + H(+). It participates in protein modification; protein lipoylation via exogenous pathway; protein N(6)-(lipoyl)lysine from lipoate: step 1/2. It functions in the pathway protein modification; protein lipoylation via exogenous pathway; protein N(6)-(lipoyl)lysine from lipoate: step 2/2. In terms of biological role, catalyzes both the ATP-dependent activation of exogenously supplied lipoate to lipoyl-AMP and the transfer of the activated lipoyl onto the lipoyl domains of lipoate-dependent enzymes. The chain is Lipoate-protein ligase A from Escherichia coli O139:H28 (strain E24377A / ETEC).